Reading from the N-terminus, the 203-residue chain is uncharacterized protein (203 aa).

Residues 90 to 188 enclose the PilZ domain; that stretch reads EKRQHVRVQP…YENIIGRYVM (99 aa).

This sequence to A.aeolicus aq_820 and aq_1583.

This is an uncharacterized protein from Aquifex aeolicus (strain VF5).